We begin with the raw amino-acid sequence, 132 residues long: Fatty acid-binding protein 1 (132 aa).

Residues Arg-106 and 128-130 (RYY) each bind a fatty acid.

The protein belongs to the calycin superfamily. Fatty-acid binding protein (FABP) family. In terms of assembly, monomer. Midgut.

The protein resides in the cytoplasm. Functionally, binds fatty acids in a 1:1 molar ratio. The polypeptide is Fatty acid-binding protein 1 (MFB1) (Manduca sexta (Tobacco hawkmoth)).